The following is a 634-amino-acid chain: Phototropic-responsive NPH3 family protein NPY2 (634 aa).

Residues serine 29 to alanine 97 form the BTB domain. An NPH3 domain is found at aspartate 207 to arginine 488. Residue tyrosine 429 is modified to Phosphotyrosine. Disordered stretches follow at residues serine 492–serine 517 and glutamine 584–serine 634. Over residues lysine 588–serine 602 the composition is skewed to gly residues. The segment covering lysine 619–serine 634 has biased composition (polar residues).

Belongs to the NPH3 family. Specifically expressed in the hypophysis and the root meristems in the embryos. Highly expressed in primary root tips and radicles.

The protein localises to the cell membrane. The protein resides in the cytoplasm. It is found in the cytosol. It participates in protein modification; protein ubiquitination. May act as a substrate-specific adapter of an E3 ubiquitin-protein ligase complex (CUL3-RBX1-BTB) which mediates the ubiquitination and subsequent proteasomal degradation of target proteins. Plays an essential role in auxin-mediated organogenesis and in root gravitropic responses through the control of PIN proteins (e.g. PIN1 and PIN2) polarity in the root tip endodermal cell layer and in shoot epidermis. Recruited to the plasma membrane by PINs (e.g. PIN1 and PIN2) and, in concert with AGC kinases-mediated (e.g. D6PK and PID) PINs phosphorylation, maintains their polarity through limiting lateral diffusion-based escape. The sequence is that of Phototropic-responsive NPH3 family protein NPY2 from Arabidopsis thaliana (Mouse-ear cress).